We begin with the raw amino-acid sequence, 318 residues long: Receptor homology region, transmembrane domain- and RING domain-containing protein 6 (318 aa).

The signal sequence occupies residues 1–20 (MNGSWITILSLLVISQLASS). Topologically, residues 22 to 162 (VTLIGKNTFL…LIPGFGISSW (141 aa)) are lumenal. Cysteines 62 and 87 form a disulfide. The region spanning 70 to 143 (EKGSKFRPSY…RTSGEVLKEY (74 aa)) is the PA domain. N-linked (GlcNAc...) asparagine glycosylation is present at Asn121. A helical transmembrane segment spans residues 163–183 (SIMAITFVSLLVISAVLASYF). The Cytoplasmic segment spans residues 184–318 (SVRRHRIRQH…DLPIVVRVYL (135 aa)). An RING-type; atypical zinc finger spans residues 233–275 (CAICIDDYRVGEILRILPCKHKYHAVCIDSWLGRCRSFCPVCK).

It localises to the prevacuolar compartment membrane. It is found in the protein storage vacuole membrane. Involved in the trafficking of vacuolar proteins. May function as a sorting receptor for protein trafficking to the protein storage vacuole (PSV). This chain is Receptor homology region, transmembrane domain- and RING domain-containing protein 6 (RMR6), found in Arabidopsis thaliana (Mouse-ear cress).